The chain runs to 1327 residues: P-glycoprotein 14 (1327 aa).

Over residues 1 to 17 (MAPKDDPDNRGFDDQRR) the composition is skewed to basic and acidic residues. Residues 1 to 23 (MAPKDDPDNRGFDDQRRPSQRST) are disordered. Over 1-104 (MAPKDDPDNR…RYGKKFDYLL (104 aa)) the chain is Cytoplasmic. A helical transmembrane segment spans residues 105–125 (LFIGTICAIISGVSQPILALV). The region spanning 106-394 (FIGTICAIIS…ISPHMMVLLN (289 aa)) is the ABC transmembrane type-1 1 domain. Over 126 to 151 (SGRVTNALLVYPPTSKQFRNKANENV) the chain is Extracellular. The chain crosses the membrane as a helical span at residues 152–172 (YIFLGIGIFISITNFIQYMCF). Residues 173-225 (QHCCTRVMAQMRHRFVYSVLRQNAGWFDKNHSGTITTKLNDSMERIREGIGDK) lie on the Cytoplasmic side of the membrane. A helical transmembrane segment spans residues 226-246 (LGVLLRGFAMLIAAIVVAYIY). Residue Glu247 is a topological domain, extracellular. The helical transmembrane segment at 248–268 (WRLASMMLGVAPTCCICMSLL) threads the bilayer. The Cytoplasmic portion of the chain corresponds to 269–331 (ARQMTSTTIK…KFAVWKGFWS (63 aa)). A helical transmembrane segment spans residues 332-352 (GFFGGLFFFWLFSFLGCGMLY). Topologically, residues 353–364 (GAYLLKVGIITT) are extracellular. Residues 365-385 (PGDVFIVVMSMLLGAYFLGLI) traverse the membrane as a helical segment. Over 386–766 (SPHMMVLLNA…NAKGNYLYMF (381 aa)) the chain is Cytoplasmic. Positions 429 to 665 (VKFENVHFRY…GGRYFDLVKA (237 aa)) constitute an ABC transporter 1 domain. 464–471 (GHSGCGKS) contacts ATP. The interval 671-721 (DPEATEEFEEEEIDLDDTSRSSRRSSMTSARSGSEAFRRGNSLNDSFSGSK) is disordered. Residues 673-686 (EATEEFEEEEIDLD) show a composition bias toward acidic residues. Over residues 694 to 704 (RSSMTSARSGS) the composition is skewed to low complexity. Residues 711–721 (NSLNDSFSGSK) show a composition bias toward polar residues. The region spanning 766–1053 (FLGTVFALIR…SAQYFPEFVK (288 aa)) is the ABC transmembrane type-1 2 domain. A helical membrane pass occupies residues 767-789 (LGTVFALIRGLELPALALIFGWV). The Extracellular segment spans residues 790–805 (FEGFTFVPYGGRMMHR). Residues 806–826 (MAMAVIAFASVGVGVWFSQLA) traverse the membrane as a helical segment. The Cytoplasmic portion of the chain corresponds to 827–886 (SSVLFAVVSENLSMRFRVQSFRNLLYQDASYFDNPAHAPGKLITRLASDAPNIKAVVDAR). A helical transmembrane segment spans residues 887–907 (MLQVIYALAAIIANIAIAFIY). Residues 908 to 910 (CWQ) lie on the Extracellular side of the membrane. Residues 911–931 (IGILGTSLILLLAFVMIGLAY) form a helical membrane-spanning segment. The Cytoplasmic segment spans residues 932 to 996 (KISLMNVEQI…KGMIEAINYS (65 aa)). A helical transmembrane segment spans residues 997 to 1017 (LTQSFMYFMMCFTYAVGIRII). Topologically, residues 1018–1030 (YQGDKSSDDTFKG) are extracellular. The chain crosses the membrane as a helical span at residues 1031-1051 (IIAMMLGAVAVMNSAQYFPEF). At 1052–1327 (VKAKTAAGML…KLIKKQDLAV (276 aa)) the chain is on the cytoplasmic side. The ABC transporter 2 domain maps to 1086-1322 (ILFENVKFSY…KGRYYKLIKK (237 aa)). ATP is bound at residue 1121 to 1128 (GPSGSGKS).

It belongs to the ABC transporter superfamily. ABCB family. Multidrug resistance exporter (TC 3.A.1.201) subfamily. As to expression, expressed in pharyngeal epithelial cells that surround the anterior pharyngeal cuticle. Shares same expression pattern as sms-5.

The protein resides in the apical cell membrane. Functionally, contributes to the establishment of a polar lipid barrier to block small molecule passage into the pharyngeal cuticle. Probably exports polar lipids into the developing pharyngeal cuticle to protect against xenobiotic insult. Likely functions in the same pathway as sphingomyelin synthase sms-5. The polypeptide is P-glycoprotein 14 (Caenorhabditis elegans).